The sequence spans 72 residues: Translation initiation factor IF-1 (72 aa).

Residues Met1–Arg72 form the S1-like domain.

The protein belongs to the IF-1 family. In terms of assembly, component of the 30S ribosomal translation pre-initiation complex which assembles on the 30S ribosome in the order IF-2 and IF-3, IF-1 and N-formylmethionyl-tRNA(fMet); mRNA recruitment can occur at any time during PIC assembly.

The protein localises to the cytoplasm. One of the essential components for the initiation of protein synthesis. Stabilizes the binding of IF-2 and IF-3 on the 30S subunit to which N-formylmethionyl-tRNA(fMet) subsequently binds. Helps modulate mRNA selection, yielding the 30S pre-initiation complex (PIC). Upon addition of the 50S ribosomal subunit IF-1, IF-2 and IF-3 are released leaving the mature 70S translation initiation complex. The polypeptide is Translation initiation factor IF-1 (Marinobacter nauticus (strain ATCC 700491 / DSM 11845 / VT8) (Marinobacter aquaeolei)).